An 852-amino-acid chain; its full sequence is Cell surface glycoprotein (852 aa).

The first 34 residues, 1–34 (MTDTTGKLRAVLLTALMVGSVIGAGVAFTGGAAA), serve as a signal peptide directing secretion. An N-linked (GalNAc...) (glycosaminoglycan) asparagine glycan is attached at Asn36. A disordered region spans residues 84–131 (KLDNEKEVSPATLSRTGGSDEGVPLQMPIPEDQSTGSYDSNGPDNDEA). The segment covering 115 to 126 (DQSTGSYDSNGP) has biased composition (polar residues). Residues Asn339, Asn398, Asn438, Asn513, Asn643, Asn727, Asn751, and Asn787 are each glycosylated (N-linked (Glc...) asparagine). The tract at residues 772–828 (ELEEPDQTTVDQPENNQTMTTTMTETTTETTTEMTTTQENTTENGSEGTSDGESGGS) is disordered. Over residues 785–823 (ENNQTMTTTMTETTTETTTEMTTTQENTTENGSEGTSDG) the composition is skewed to low complexity. Residues Thr789, Thr791, Thr792, Thr793, Thr795, Thr797, Thr798, Thr799, Thr801, Thr802, Thr803, Thr806, Thr807, and Thr808 are each glycosylated (O-linked (Gal...) threonine). N-linked (Glc...) asparagine glycosylation is present at Asn811. Residues Thr812 and Thr813 are each glycosylated (O-linked (Gal...) threonine). A glycan (N-linked (Glc...) asparagine) is linked at Asn815. The helical transmembrane segment at 829–849 (IPGFGVGVALVAVLGAALLAL) threads the bilayer. The short motif at 830–832 (PGF) is the PGF sorting signal element.

This sequence belongs to the halobacterial S-layer protein family. Post-translationally, N-linked glycan at Asn-36 consists of a glycosaminoglycan chain, constructed by a repeating sulfated pentasaccharide block composed of GlcNAc, GalNAc, Gal, GalA, 3-O-methyl-GalA, and sulfate in the molar ratio of 1:1:1:1:1:2; the other N-linked glycans contain Glc, GlcA and IdoA. In terms of processing, O-linked glycans consist of Glc-Gal disaccharides. The C-terminus (residues 770-778) is lipidated with diphytanylglyceryl phosphate. Post-translationally, cleaved by the archaeosortase ArtA at the C-terminus, with removal of a short hydrophobic segment.

The protein resides in the secreted. The protein localises to the cell wall. It localises to the S-layer. Its subcellular location is the cell membrane. Its function is as follows. S-layer protein. The S-layer is a paracrystalline mono-layered assembly of proteins which coat the surface of the cell. The sequence is that of Cell surface glycoprotein (csg) from Halobacterium salinarum (strain ATCC 29341 / DSM 671 / R1).